The primary structure comprises 246 residues: MHSWPYTSPMDALIRYFPQVDYSSCWHAMRDLTDHRDAQQSDEFWVLEHPPIFTLGQAGKPEHVLNAGEIPVVNSDRGGQVTYHGPGQTVVYLMLDIKRLGLGSRGLVSAIEQGIIDFLASLGITAVNRDDAPGVYVQGAKIASLGLRIRRGATYHGLAINRDMDLSPWHRINPCGHVDQPMTTLKAQGVDLDRHSMEQQLVSFLAKRLGLTPRTAALPDWYNTRQENVTTGGDPGSALTQQPERL.

Residues 38 to 213 enclose the BPL/LPL catalytic domain; sequence AQQSDEFWVL…FLAKRLGLTP (176 aa). Substrate-binding positions include 77–84, 144–146, and 157–159; these read RGGQVTYH, SLG, and GLA. Cysteine 175 (acyl-thioester intermediate) is an active-site residue. The interval 225–246 is disordered; sequence RQENVTTGGDPGSALTQQPERL.

Belongs to the LipB family.

Its subcellular location is the cytoplasm. The catalysed reaction is octanoyl-[ACP] + L-lysyl-[protein] = N(6)-octanoyl-L-lysyl-[protein] + holo-[ACP] + H(+). Its pathway is protein modification; protein lipoylation via endogenous pathway; protein N(6)-(lipoyl)lysine from octanoyl-[acyl-carrier-protein]: step 1/2. In terms of biological role, catalyzes the transfer of endogenously produced octanoic acid from octanoyl-acyl-carrier-protein onto the lipoyl domains of lipoate-dependent enzymes. Lipoyl-ACP can also act as a substrate although octanoyl-ACP is likely to be the physiological substrate. The chain is Octanoyltransferase from Alcanivorax borkumensis (strain ATCC 700651 / DSM 11573 / NCIMB 13689 / SK2).